The following is a 220-amino-acid chain: tRNA (guanine-N(7)-)-methyltransferase (220 aa).

3 residues coordinate S-adenosyl-L-methionine: Glu42, Glu67, and Asp122. Residue Asp122 is part of the active site. Residues Lys126, Asp158, and 198–201 (TEYE) contribute to the substrate site.

This sequence belongs to the class I-like SAM-binding methyltransferase superfamily. TrmB family.

The catalysed reaction is guanosine(46) in tRNA + S-adenosyl-L-methionine = N(7)-methylguanosine(46) in tRNA + S-adenosyl-L-homocysteine. The protein operates within tRNA modification; N(7)-methylguanine-tRNA biosynthesis. Its function is as follows. Catalyzes the formation of N(7)-methylguanine at position 46 (m7G46) in tRNA. This is tRNA (guanine-N(7)-)-methyltransferase from Mycoplasma capricolum subsp. capricolum (strain California kid / ATCC 27343 / NCTC 10154).